The chain runs to 76 residues: uncharacterized protein (76 aa).

Residues 15–69 form the HTH cro/C1-type domain; the sequence is VRIVRKEQNLRQDELAGVAGVGLRFIVDLEAGKPTAQIGKVLQVLQTLGCSIDIL. The H-T-H motif DNA-binding region spans 26–45; that stretch reads QDELAGVAGVGLRFIVDLEA.

This is an uncharacterized protein from Sinorhizobium fredii (strain NBRC 101917 / NGR234).